The sequence spans 235 residues: tRNA pseudouridine synthase B (235 aa).

D45 serves as the catalytic Nucleophile.

This sequence belongs to the pseudouridine synthase TruB family. Type 1 subfamily.

The catalysed reaction is uridine(55) in tRNA = pseudouridine(55) in tRNA. Responsible for synthesis of pseudouridine from uracil-55 in the psi GC loop of transfer RNAs. This Chlamydia pneumoniae (Chlamydophila pneumoniae) protein is tRNA pseudouridine synthase B.